We begin with the raw amino-acid sequence, 218 residues long: Pyridoxine/pyridoxamine 5'-phosphate oxidase (218 aa).

Substrate is bound by residues 14 to 17 (RREY) and lysine 72. FMN-binding positions include 67-72 (RIVLLK), 82-83 (YT), arginine 88, lysine 89, and glutamine 111. Substrate is bound by residues tyrosine 129, arginine 133, and serine 137. Residues 146–147 (QS) and tryptophan 191 contribute to the FMN site. Residue 197–199 (RLH) participates in substrate binding. Position 201 (arginine 201) interacts with FMN.

The protein belongs to the pyridoxamine 5'-phosphate oxidase family. Homodimer. FMN is required as a cofactor.

It catalyses the reaction pyridoxamine 5'-phosphate + O2 + H2O = pyridoxal 5'-phosphate + H2O2 + NH4(+). The enzyme catalyses pyridoxine 5'-phosphate + O2 = pyridoxal 5'-phosphate + H2O2. It functions in the pathway cofactor metabolism; pyridoxal 5'-phosphate salvage; pyridoxal 5'-phosphate from pyridoxamine 5'-phosphate: step 1/1. It participates in cofactor metabolism; pyridoxal 5'-phosphate salvage; pyridoxal 5'-phosphate from pyridoxine 5'-phosphate: step 1/1. Its function is as follows. Catalyzes the oxidation of either pyridoxine 5'-phosphate (PNP) or pyridoxamine 5'-phosphate (PMP) into pyridoxal 5'-phosphate (PLP). The chain is Pyridoxine/pyridoxamine 5'-phosphate oxidase from Salmonella paratyphi B (strain ATCC BAA-1250 / SPB7).